The primary structure comprises 868 residues: MHEQYTPRDIEAAAQKFWDEQQSFAVTEQPGKDTYYCLSMFPYPSGKLHMGHVRNYTIGDVIARYQRMLGKNVLQPMGWDAFGMPAENAAMKNNVAPAKWTYENIDYMKTQLKSLGLAIDWAREVTTCKPDYYRWEQWLFTRLFEKGIIYRKNGTVNWDPADQTVLANEQVIDGRGWRSGALIEKREIPMYYFRITDYADELLESLDELPGWPEQVKTMQRNWIGKSRGMEVQFPYDQASIGHEGTLKVFTTRPDTLMGATYVAVAAEHPLATQAAQGNPALQAFIDECKSGSVAEADMATQEKKGMATSLLVEHPLTGEKLPVWVANYVLMHYGDGAVMAVPAHDERDFEFAHKYNLPVKAVVRTSAGDEVGSEWQAAYGEHGQLINSAEFDGLDFAGAFDAIEAALIRKELGKSRTQFRLRDWGISRQRYWGCPIPIIHCPSCGDVPVPEDQLPVTLPENVVPDGAGSPLARMPEFYECTCPKCGTAAKRETDTMDTFVESSWYFARYASPNYDKGLVDPKAANHWLPVDQYIGGIEHAILHLLYARFFHKLMRDEGLVTSNEPFKNLLTQGMVVAETYYRVASNGGKDWFNPADVEIERDAKAKIIGARLKTDGLPVEIGGTEKMSKSKNNGVDPQSMIEAYGADTCRLFMMFASPPDMSLEWSDSGVEGASRFLRRVWRLAQAHVSQGLPGKLDVATLDDAQKVIRRAIHAAIKQASTDVGQFHKFNTAIAQVMTVMNVLEKAPQATEQDRALLQEGLEAVTLLLAPITPHISHELWQQLGHAGSVIDAAWPSVDEQALVQDTITLVVQVNGKLRGQVEMPAAASREEVEAAARGNENVLRFIDGLTIRKVIVVPGKLVNIVAN.

The 'HIGH' region signature appears at 42 to 52; it reads PYPSGKLHMGH. A 'KMSKS' region motif is present at residues 627–631; it reads KMSKS. Position 630 (Lys630) interacts with ATP.

Belongs to the class-I aminoacyl-tRNA synthetase family.

The protein resides in the cytoplasm. The catalysed reaction is tRNA(Leu) + L-leucine + ATP = L-leucyl-tRNA(Leu) + AMP + diphosphate. The chain is Leucine--tRNA ligase from Pseudomonas putida (strain GB-1).